The following is a 173-amino-acid chain: Soluble secreted antigen MPT53 (173 aa).

An N-terminal signal peptide occupies residues Met1–Ala38. Residues Cys73 and Cys76 are joined by a disulfide bond.

The protein belongs to the thioredoxin family.

It is found in the secreted. In terms of biological role, disulfide oxidoreductase that catalyzes the oxidation of reduced, unfolded secreted proteins to form disulfide bonds. Despite a weak homology to thioredoxin this cannot serve as a substrate for thioredoxin reductase. This chain is Soluble secreted antigen MPT53 (mpt53), found in Mycobacterium bovis (strain ATCC BAA-935 / AF2122/97).